Reading from the N-terminus, the 504-residue chain is Maturase K (504 aa).

Belongs to the intron maturase 2 family. MatK subfamily.

It localises to the plastid. The protein resides in the chloroplast. Usually encoded in the trnK tRNA gene intron. Probably assists in splicing its own and other chloroplast group II introns. This chain is Maturase K, found in Nepenthes distillatoria (Pitcher plant).